The primary structure comprises 380 residues: Cytochrome b (380 aa).

Helical transmembrane passes span 34–54, 78–99, 114–134, and 179–199; these read FGSL…FLAM, WLLR…YCHI, WNVG…GYVL, and FFAF…IDLV. Heme b-binding residues include His84 and His98. His183 contacts heme b. His202 lines the a ubiquinone pocket. 4 consecutive transmembrane segments (helical) span residues 227 to 247, 289 to 309, 321 to 341, and 348 to 369; these read TKDT…ALLF, LGGV…PLLN, LSQA…WIGS, and FVLI…GFPL.

The protein belongs to the cytochrome b family. As to quaternary structure, the main subunits of complex b-c1 are: cytochrome b, cytochrome c1 and the Rieske protein. Requires heme b as cofactor.

Its subcellular location is the mitochondrion inner membrane. In terms of biological role, component of the ubiquinol-cytochrome c reductase complex (complex III or cytochrome b-c1 complex) that is part of the mitochondrial respiratory chain. The b-c1 complex mediates electron transfer from ubiquinol to cytochrome c. Contributes to the generation of a proton gradient across the mitochondrial membrane that is then used for ATP synthesis. The chain is Cytochrome b (MT-CYB) from Paracentrotus lividus (Common sea urchin).